Here is an 867-residue protein sequence, read N- to C-terminus: Alanine--tRNA ligase (867 aa).

His-554, His-558, Cys-656, and His-660 together coordinate Zn(2+).

Belongs to the class-II aminoacyl-tRNA synthetase family. Zn(2+) is required as a cofactor.

The protein localises to the cytoplasm. It carries out the reaction tRNA(Ala) + L-alanine + ATP = L-alanyl-tRNA(Ala) + AMP + diphosphate. In terms of biological role, catalyzes the attachment of alanine to tRNA(Ala) in a two-step reaction: alanine is first activated by ATP to form Ala-AMP and then transferred to the acceptor end of tRNA(Ala). Also edits incorrectly charged Ser-tRNA(Ala) and Gly-tRNA(Ala) via its editing domain. The protein is Alanine--tRNA ligase of Methylococcus capsulatus (strain ATCC 33009 / NCIMB 11132 / Bath).